The chain runs to 227 residues: Ashwin (227 aa).

The segment covering 71-84 (LPRSRWGKRMEKSR) has biased composition (basic and acidic residues). Residues 71 to 227 (LPRSRWGKRM…KKKIQHITWP (157 aa)) form a disordered region. The segment covering 88-98 (SSSSTHSSSTD) has biased composition (low complexity). Residues 153–173 (GASTNCSSSNFSNRTPVSSSG) are compositionally biased toward polar residues. Residues 178–191 (SPSNHSNSSVHSNN) are compositionally biased toward low complexity. Basic and acidic residues predominate over residues 204-219 (GEPDTAKDIKSPETKK).

Belongs to the ashwin family.

The protein resides in the nucleus. The chain is Ashwin from Danio rerio (Zebrafish).